The primary structure comprises 418 residues: uncharacterized protein (418 aa).

It belongs to the poxviruses C4/C10 family.

This is an uncharacterized protein from Fowlpox virus (strain NVSL) (FPV).